We begin with the raw amino-acid sequence, 527 residues long: DNA polymerase epsilon subunit 2 (527 aa).

Belongs to the DNA polymerase epsilon subunit B family. In terms of assembly, component of the DNA polymerase epsilon complex consisting of four subunits: the catalytic subunit POLE and the accessory subunits POLE2, POLE3 and POLE4.

It localises to the nucleus. Accessory component of the DNA polymerase epsilon complex. Participates in DNA repair and in chromosomal DNA replication. The polypeptide is DNA polymerase epsilon subunit 2 (Homo sapiens (Human)).